The sequence spans 364 residues: DNA replication and repair protein RecF (364 aa).

An ATP-binding site is contributed by 30 to 37; sequence GDNGAGKT.

Belongs to the RecF family.

The protein resides in the cytoplasm. In terms of biological role, the RecF protein is involved in DNA metabolism; it is required for DNA replication and normal SOS inducibility. RecF binds preferentially to single-stranded, linear DNA. It also seems to bind ATP. The polypeptide is DNA replication and repair protein RecF (Stenotrophomonas maltophilia (strain K279a)).